We begin with the raw amino-acid sequence, 572 residues long: Methionine--tRNA ligase (572 aa).

The 'HIGH' region motif lies at 11–21 (PYINGIKHLGN). Positions 143, 146, 156, and 159 each coordinate Zn(2+). Positions 346–350 (QFSTS) match the 'KMSKS' region motif. Thr349 provides a ligand contact to ATP.

It belongs to the class-I aminoacyl-tRNA synthetase family. MetG type 1 subfamily. In terms of assembly, monomer. It depends on Zn(2+) as a cofactor.

It localises to the cytoplasm. It carries out the reaction tRNA(Met) + L-methionine + ATP = L-methionyl-tRNA(Met) + AMP + diphosphate. Functionally, is required not only for elongation of protein synthesis but also for the initiation of all mRNA translation through initiator tRNA(fMet) aminoacylation. The chain is Methionine--tRNA ligase from Cereibacter sphaeroides (strain KD131 / KCTC 12085) (Rhodobacter sphaeroides).